The sequence spans 283 residues: uncharacterized protein (283 aa).

Positions 1-10 are enriched in polar residues; that stretch reads MELNKTSESL. Disordered stretches follow at residues 1–99 and 255–283; these read MELN…NPTS and DQEG…EAHI. Basic and acidic residues-rich tracts occupy residues 14 to 34, 42 to 53, and 61 to 71; these read KIDH…REVR, SSTRQEKADRMP, and ESSKGSEEGAV.

The protein belongs to the chlamydial CPn_0705/CT_671/TC_0042 family.

This is an uncharacterized protein from Chlamydia trachomatis serovar D (strain ATCC VR-885 / DSM 19411 / UW-3/Cx).